Consider the following 784-residue polypeptide: Ribosome biogenesis protein BOP1 homolog (784 aa).

Residues 1-11 (MTKKLALKRKG) are compositionally biased toward basic residues. A disordered region spans residues 1–159 (MTKKLALKRK…DSDTSDEEDI (159 aa)). Composition is skewed to acidic residues over residues 27–36 (SENEEEEEDL), 45–54 (EDSTDDEGID), 62–73 (SEELQFESDEEG), and 84–111 (AEEDEESSDEDDDGEEESSDEEEVEDEE). Basic and acidic residues predominate over residues 112 to 123 (KDSKLKQSDDKP). Residues 124 to 133 (SSSGAASKKA) show a composition bias toward low complexity. Basic and acidic residues predominate over residues 138 to 148 (LSKRDTSKPEY). Acidic residues predominate over residues 149-158 (QDSDTSDEED). WD repeat units follow at residues 445–486 (GHTD…RTIE), 488–526 (DEVVRCVAWCPNPKLSIIAVATGNRLLLVNPKVGDKVLV), 570–612 (THFK…SQIP), 615–653 (KSKGLIQFVLFHPVKPCFFVATQHNIRIYDLVKQELVKK), 656–695 (TNSKWISGMSIHPKGDNLLVSTYDKKMLWFDLDLSTKPYQ), 699–738 (LHRNAVRSVAFHLRYPLFASGSDDQAVIVSHGMVYNDLLQ), and 754–784 (RDEFGVLDVNWHPVQPWVFSTGADSTIRLYT).

It belongs to the WD repeat BOP1/ERB1 family.

The protein resides in the nucleus. It localises to the nucleolus. It is found in the nucleoplasm. Required for maturation of ribosomal RNAs and formation of the large ribosomal subunit. This Drosophila erecta (Fruit fly) protein is Ribosome biogenesis protein BOP1 homolog.